We begin with the raw amino-acid sequence, 372 residues long: MIFPWKCQSTQRDLWNIFKLWGWTMLCCDFLAHHGTDCWTYHYSEKPMNWQRARRFCRDNYTDLVAIQNKAEIEYLEKTLPFSRSYYWIGIRKIGGIWTWVGTNKSLTEEAENWGDGEPNNKKNKEDCVEIYIKRNKDAGKWNDDACHKLKAALCYTASCQPWSCSGHGECVEIINNYTCNCDVGYYGPQCQFVIQCEPLEAPELGTMDCTHPLGNFSFSSQCAFSCSEGTNLTGIEETTCGPFGNWSSPEPTCQVIQCEPLSAPDLGIMNCSHPLASFSFTSACTFICSEGTELIGKKKTICESSGIWSNPSPICQKLDKSFSMIKEGDYNPLFIPVAVMVTAFSGLAFIIWLARRLKKGKKSKRSMNDPY.

The N-terminal stretch at 1–28 is a signal peptide; it reads MIFPWKCQSTQRDLWNIFKLWGWTMLCC. Positions 29–38 are excised as a propeptide; it reads DFLAHHGTDC. Residues 39 to 332 lie on the Extracellular side of the membrane; the sequence is WTYHYSEKPM…FSMIKEGDYN (294 aa). The C-type lectin domain occupies 55 to 155; the sequence is RFCRDNYTDL…ACHKLKAALC (101 aa). 9 disulfides stabilise this stretch: C57/C155, C128/C147, C160/C171, C165/C180, C182/C191, C197/C241, C227/C254, C259/C303, and C289/C316. N60 and N104 each carry an N-linked (GlcNAc...) asparagine glycan. Ca(2+) is bound by residues E118, N120, E126, N143, and D144. The region spanning 156 to 192 is the EGF-like domain; sequence YTASCQPWSCSGHGECVEIINNYTCNCDVGYYGPQCQ. N177 is a glycosylation site (N-linked (GlcNAc...) asparagine). Sushi domains are found at residues 195-256 and 257-318; these read IQCE…TCQV and IQCE…ICQK. Residues N232, N246, and N271 are each glycosylated (N-linked (GlcNAc...) asparagine). Residues 333–355 traverse the membrane as a helical segment; sequence PLFIPVAVMVTAFSGLAFIIWLA. Topologically, residues 356-372 are cytoplasmic; it reads RRLKKGKKSKRSMNDPY.

The protein belongs to the selectin/LECAM family. As to quaternary structure, interaction with SELPLG/PSGL1 and PODXL2 is required for promoting recruitment and rolling of leukocytes. This interaction is dependent on the sialyl Lewis X glycan modification of SELPLG and PODXL2, and tyrosine sulfation modifications of SELPLG. Sulfation on 'Tyr-51' of SELPLG is important for L-selectin binding. In terms of processing, N-glycosylated. In terms of tissue distribution, expressed in B-cell lines and T-lymphocytes.

The protein localises to the cell membrane. In terms of biological role, calcium-dependent lectin that mediates cell adhesion by binding to glycoproteins on neighboring cells. Mediates the adherence of lymphocytes to endothelial cells of high endothelial venules in peripheral lymph nodes. Promotes initial tethering and rolling of leukocytes in endothelia. This is L-selectin (SELL) from Homo sapiens (Human).